The primary structure comprises 494 residues: Cytochrome P450 2A3 (494 aa).

Phosphoserine is present on Ser-131. Lys-379 carries the post-translational modification N6-acetyllysine. Position 439 (Cys-439) interacts with heme.

Belongs to the cytochrome P450 family. It depends on heme as a cofactor. As to expression, lung.

The protein localises to the endoplasmic reticulum membrane. Its subcellular location is the microsome membrane. It catalyses the reaction an organic molecule + reduced [NADPH--hemoprotein reductase] + O2 = an alcohol + oxidized [NADPH--hemoprotein reductase] + H2O + H(+). Functionally, cytochromes P450 are a group of heme-thiolate monooxygenases. In liver microsomes, this enzyme is involved in an NADPH-dependent electron transport pathway. It oxidizes a variety of structurally unrelated compounds, including steroids, fatty acids, and xenobiotics. In Rattus norvegicus (Rat), this protein is Cytochrome P450 2A3 (Cyp2a3).